Here is a 187-residue protein sequence, read N- to C-terminus: Ribosome-recycling factor (187 aa).

This sequence belongs to the RRF family.

The protein resides in the cytoplasm. In terms of biological role, responsible for the release of ribosomes from messenger RNA at the termination of protein biosynthesis. May increase the efficiency of translation by recycling ribosomes from one round of translation to another. The polypeptide is Ribosome-recycling factor (Rhodopseudomonas palustris (strain HaA2)).